The primary structure comprises 289 residues: Agmatinase (289 aa).

Mn(2+) is bound by residues H112, D135, H137, D139, D216, and D218.

The protein belongs to the arginase family. Agmatinase subfamily. Requires Mn(2+) as cofactor.

The catalysed reaction is agmatine + H2O = urea + putrescine. Its pathway is amine and polyamine biosynthesis; putrescine biosynthesis via agmatine pathway; putrescine from agmatine: step 1/1. Functionally, catalyzes the formation of putrescine from agmatine. The sequence is that of Agmatinase (speB) from Halalkalibacterium halodurans (strain ATCC BAA-125 / DSM 18197 / FERM 7344 / JCM 9153 / C-125) (Bacillus halodurans).